The sequence spans 180 residues: MVNALKEKYVNEVRPALISKFDYTSLMQAPKLEKIVLNMGVGDAVTNSNNLDEAVSELRLIAGQQPVVTKAKKSIAGFRLREGMSIGSKVTLRGTRMYDFLDKLINVALPRVRDFHGTSTKSFDGRGNYTLGIKEQLIFPEINYDDVNRVRGLDIVIVTTAKTDEEGLELLSQLGMPFAK.

Belongs to the universal ribosomal protein uL5 family. As to quaternary structure, part of the 50S ribosomal subunit; part of the 5S rRNA/L5/L18/L25 subcomplex. Contacts the 5S rRNA and the P site tRNA. Forms a bridge to the 30S subunit in the 70S ribosome.

Its function is as follows. This is one of the proteins that bind and probably mediate the attachment of the 5S RNA into the large ribosomal subunit, where it forms part of the central protuberance. In the 70S ribosome it contacts protein S13 of the 30S subunit (bridge B1b), connecting the 2 subunits; this bridge is implicated in subunit movement. Contacts the P site tRNA; the 5S rRNA and some of its associated proteins might help stabilize positioning of ribosome-bound tRNAs. The polypeptide is Large ribosomal subunit protein uL5 (Oenococcus oeni (strain ATCC BAA-331 / PSU-1)).